The chain runs to 520 residues: Pleckstrin homology domain-containing family O member 1-A (520 aa).

4 disordered regions span residues 1–23 (MKKS…QPDK), 208–296 (SLDK…GHLQ), 313–439 (IQEQ…KSTD), and 497–520 (QARQ…QKSP). The region spanning 20–131 (QPDKVGWIRR…WINVLNTAIT (112 aa)) is the PH domain. Over residues 227-241 (PASNTEAQEKTSSLP) the composition is skewed to polar residues. Basic and acidic residues-rich tracts occupy residues 242-255 (RKSE…DHPR) and 333-347 (DSPR…DSPH). The segment covering 348-361 (SKGSSSPHSANSPS) has biased composition (low complexity). Basic and acidic residues-rich tracts occupy residues 363–385 (RAKD…DSPR) and 396–418 (KSID…DLTH). The segment covering 420–439 (KGSQSPLSTGSNSPHMKSTD) has biased composition (polar residues). The span at 497 to 506 (QARQRREELS) shows a compositional bias: basic and acidic residues. Over residues 509 to 520 (GMASQKLQQKSP) the composition is skewed to polar residues.

Post-translationally, C-terminal fragments could be released during apoptosis via caspase-3-dependent cleavage.

The protein localises to the membrane. The protein resides in the nucleus. Its subcellular location is the cytoplasm. Functionally, plays a role in the regulation of the actin cytoskeleton through its interactions with actin capping protein (CP). The sequence is that of Pleckstrin homology domain-containing family O member 1-A (plekho1a) from Danio rerio (Zebrafish).